A 409-amino-acid polypeptide reads, in one-letter code: Sulfide-quinone reductase (409 aa).

FAD contacts are provided by residues G8–G12, N34–K35, and C129. The active-site Cysteine persulfide intermediate is the C178. Positions 271, 307, and 317 each coordinate FAD. Residue C350 is the Cysteine persulfide intermediate of the active site.

This sequence belongs to the SQRD family. Monomer. The cofactor is FAD.

It localises to the membrane. It carries out the reaction n a quinone + n hydrogen sulfide + n H(+) = polysulfur(n-2) + n a quinol. With respect to regulation, inhibited by the quinone analog 2-heptyl-4-hydroxyquinolone N-oxide (HQNO). Inactivated by iodoacetamide treatment. Inhibited by KCN. Catalyzes the oxidation of sulfides, such as hydrogen sulfide, with the help of a quinone. Has the highest activity with caldariella quinone and decylubiquinone, and lower activity with naphtoquinones. Consecutive reaction cycles lead to the accumulation of a polysulfide product on the active site Cys residues; these products are released when they exceed a critical length, typically as cyclooctasulfur. This Acidianus ambivalens (Desulfurolobus ambivalens) protein is Sulfide-quinone reductase.